The chain runs to 409 residues: Tyrosine--tRNA ligase (409 aa).

The short motif at 54–63 is the 'HIGH' region element; the sequence is PTAPDIHLGH. Positions 238 to 242 match the 'KMSKS' region motif; the sequence is KMSKS. ATP is bound at residue K241. One can recognise an S4 RNA-binding domain in the interval 347 to 407; sequence QGILRILREA…GKRKFARVKL (61 aa).

The protein belongs to the class-I aminoacyl-tRNA synthetase family. TyrS type 2 subfamily. Homodimer.

The protein localises to the cytoplasm. The catalysed reaction is tRNA(Tyr) + L-tyrosine + ATP = L-tyrosyl-tRNA(Tyr) + AMP + diphosphate + H(+). Catalyzes the attachment of tyrosine to tRNA(Tyr) in a two-step reaction: tyrosine is first activated by ATP to form Tyr-AMP and then transferred to the acceptor end of tRNA(Tyr). The protein is Tyrosine--tRNA ligase of Bordetella pertussis (strain Tohama I / ATCC BAA-589 / NCTC 13251).